The chain runs to 255 residues: 28.1 kDa virulence protein (255 aa).

It belongs to the SpvA family.

Functionally, not known. This protein is involved in the virulence of salmonellas. In Salmonella typhimurium, this protein is 28.1 kDa virulence protein (mkaB).